Consider the following 221-residue polypeptide: Eukaryotic translation initiation factor NCBP (221 aa).

The protein belongs to the eukaryotic initiation factor 4E family. In terms of assembly, EIF4F is a multi-subunit complex, the composition of which varies with external and internal environmental conditions. It is composed of at least EIF4A, EIF4E and EIF4G. EIF4E is also known to interact with other partners. In higher plants two isoforms of EIF4F have been identified, named isoform EIF4F and isoform EIF(iso)4F. Isoform EIF4F has subunits p220 and p26, whereas isoform EIF(iso)4F has subunits p82 and p28.

Its function is as follows. Recognizes and binds the 7-methylguanosine-containing mRNA cap during an early step in the initiation of protein synthesis and facilitates ribosome binding by inducing the unwinding of the mRNAs secondary structures. The protein is Eukaryotic translation initiation factor NCBP (NCBP) of Arabidopsis thaliana (Mouse-ear cress).